The following is a 299-amino-acid chain: KATNB1-like protein 1 (299 aa).

A Nuclear localization signal motif is present at residues 8 to 15; it reads VKKRNFSN. S56 is modified (phosphoserine).

As to quaternary structure, interacts with KATNA1 and KATNAL1; these interactions are competed by KATNB1 which has a higher affinity for them.

Its subcellular location is the nucleus. It localises to the cytoplasm. The protein resides in the cytoskeleton. It is found in the spindle pole. In terms of biological role, regulates microtubule-severing activity of KATNAL1 in a concentration-dependent manner in vitro. This is KATNB1-like protein 1 (Katnbl1) from Mus musculus (Mouse).